Here is a 427-residue protein sequence, read N- to C-terminus: Inward rectifier potassium channel 2 (427 aa).

The Cytoplasmic segment spans residues 1 to 81; it reads MGSVRTNRYS…IFTTCVDIRW (81 aa). C76 bears the S-nitrosocysteine mark. Residues 82 to 106 traverse the membrane as a helical segment; sequence RWMLVIFCLAFVLSWLFFGCVFWLI. The Extracellular portion of the chain corresponds to 107–128; sequence ALLHGDLDASKESKACVSEVNS. The helical; Pore-forming intramembrane region spans 129 to 140; the sequence is FTAAFLFSIETQ. The pore-forming intramembrane region spans 141 to 147; the sequence is TTIGYGF. The short motif at 142–147 is the Selectivity filter element; it reads TIGYGF. Residues 148–156 are Extracellular-facing; sequence RCVTDECPI. Residues 157 to 178 traverse the membrane as a helical segment; it reads AVFMVVFQSIVGCIIDAFIIGA. Residues 179 to 427 lie on the Cytoplasmic side of the membrane; sequence VMAKMAKPKK…PRPLRRESEI (249 aa). A polyphosphoinositide (PIP2)-binding region spans residues 181–208; that stretch reads AKMAKPKKRNETLVFSHNAVIAMRDGKL. The segment at 384 to 427 is disordered; the sequence is SKEEDDSENGVPESTSTDTPPDIDLHNQASVPLEPRPLRRESEI. Residues 425–427 carry the PDZ-binding motif; sequence SEI.

It belongs to the inward rectifier-type potassium channel (TC 1.A.2.1) family. KCNJ2 subfamily. Homotetramer. Homomultimeric and heteromultimeric association with KCNJ4/Kir2.3. Can form heteromeric channels with Kir2.6/KCNJ18. Associates, via its PDZ-recognition domain, with a complex containing LIN7A, LIN7B, LIN7C, DLG1, CASK and APBA1. In terms of processing, S-nitrosylation increases the open probability and inward rectifying currents.

The protein resides in the cell membrane. Its subcellular location is the sarcolemma. The protein localises to the T-tubule. It carries out the reaction K(+)(in) = K(+)(out). Activated by phosphatidylinositol 4,5 biphosphate (PtdIns(4,5)P2). Inward rectifier potassium channels are characterized by a greater tendency to allow potassium to flow into the cell rather than out of it. Their voltage dependence is regulated by the concentration of extracellular potassium; as external potassium is raised, the voltage range of the channel opening shifts to more positive voltages. The inward rectification is mainly due to the blockage of outward current by internal magnesium. Can be blocked by extracellular barium and cesium. Probably participates in establishing action potential waveform and excitability of neuronal and muscle tissues. This is Inward rectifier potassium channel 2 (KCNJ2) from Sus scrofa (Pig).